Consider the following 211-residue polypeptide: Large ribosomal subunit protein uL4 (211 aa).

2 disordered regions span residues Met-1 to Pro-28 and Thr-48 to Tyr-99. Residues Arg-10–Pro-28 are compositionally biased toward basic and acidic residues.

This sequence belongs to the universal ribosomal protein uL4 family. In terms of assembly, part of the 50S ribosomal subunit.

One of the primary rRNA binding proteins, this protein initially binds near the 5'-end of the 23S rRNA. It is important during the early stages of 50S assembly. It makes multiple contacts with different domains of the 23S rRNA in the assembled 50S subunit and ribosome. Its function is as follows. Forms part of the polypeptide exit tunnel. This is Large ribosomal subunit protein uL4 from Rubrobacter xylanophilus (strain DSM 9941 / JCM 11954 / NBRC 16129 / PRD-1).